Consider the following 407-residue polypeptide: Arginine biosynthesis bifunctional protein ArgJ (407 aa).

Residues Thr-157, Lys-183, Thr-194, Glu-280, Asn-402, and Thr-407 each contribute to the substrate site. Thr-194 serves as the catalytic Nucleophile.

It belongs to the ArgJ family. Heterotetramer of two alpha and two beta chains.

It localises to the cytoplasm. The catalysed reaction is N(2)-acetyl-L-ornithine + L-glutamate = N-acetyl-L-glutamate + L-ornithine. It carries out the reaction L-glutamate + acetyl-CoA = N-acetyl-L-glutamate + CoA + H(+). It participates in amino-acid biosynthesis; L-arginine biosynthesis; L-ornithine and N-acetyl-L-glutamate from L-glutamate and N(2)-acetyl-L-ornithine (cyclic): step 1/1. The protein operates within amino-acid biosynthesis; L-arginine biosynthesis; N(2)-acetyl-L-ornithine from L-glutamate: step 1/4. In terms of biological role, catalyzes two activities which are involved in the cyclic version of arginine biosynthesis: the synthesis of N-acetylglutamate from glutamate and acetyl-CoA as the acetyl donor, and of ornithine by transacetylation between N(2)-acetylornithine and glutamate. The chain is Arginine biosynthesis bifunctional protein ArgJ from Bacillus anthracis.